An 817-amino-acid chain; its full sequence is Protein EFR3 homolog B (817 aa).

Phosphoserine is present on residues serine 212, serine 214, and serine 216.

Belongs to the EFR3 family. In terms of assembly, component of a phosphatidylinositol 4-kinase (PI4K) complex, composed of PI4KA, EFR3 (EFR3A or EFR3B), TTC7 (TTC7A or TTC7B) and HYCC (HYCC1 or HYCC2). Palmitoylated at its N-terminus, anchoring the protein to the plasma membrane.

It is found in the cell membrane. The protein resides in the cytoplasm. It localises to the cytosol. Its function is as follows. Component of a complex required to localize phosphatidylinositol 4-kinase (PI4K) to the plasma membrane. The complex acts as a regulator of phosphatidylinositol 4-phosphate (PtdIns(4)P) synthesis. In the complex, EFR3B probably acts as the membrane-anchoring component. Also involved in responsiveness to G-protein-coupled receptors; it is however unclear whether this role is direct or indirect. This chain is Protein EFR3 homolog B, found in Homo sapiens (Human).